The chain runs to 1016 residues: Probably inactive leucine-rich repeat receptor-like protein kinase At3g28040 (1016 aa).

An N-terminal signal peptide occupies residues 1-26 (MGKQRRTMISFTLFLTLTMMSSLING). Residues 27-646 (DTDSIQLNDD…FHRRMFLSVS (620 aa)) lie on the Extracellular side of the membrane. LRR repeat units lie at residues 102–124 (RLKV…SNNN), 125–147 (HLQK…LGSI), 149–171 (SLQH…LFNN), 174–196 (SLRY…LFRC), 198–219 (VLNS…VSGI), 224–245 (RLRA…GILS), 248–270 (NLKE…IGLC), 272–295 (HLNR…QKLK), 296–318 (SLNH…IGDM), 320–342 (GLVH…ISNL), 344–366 (SLKD…LESC), 368–390 (ELMI…FFDL), 391–413 (GLQE…SSRL), 416–438 (SLIR…VGLF), 440–462 (HMRY…IEFL), 464–486 (NLTV…ICES), 488–510 (SLQI…IGNC), 512–535 (SLKL…SNLQ), 536–559 (ELKI…GDLQ), and 560–582 (NLLL…DVFQ). 3 N-linked (GlcNAc...) asparagine glycosylation sites follow: Asn-112, Asn-135, and Asn-171. Residue Asn-203 is glycosylated (N-linked (GlcNAc...) asparagine). Asn-349 is a glycosylation site (N-linked (GlcNAc...) asparagine). 4 N-linked (GlcNAc...) asparagine glycosylation sites follow: Asn-445, Asn-464, Asn-509, and Asn-522. N-linked (GlcNAc...) asparagine glycosylation occurs at Asn-565. The helical transmembrane segment at 647-667 (VIVAISAAILIFSGVIIITLL) threads the bilayer. Over 668–1016 (NASVRRRLAF…PVPHRIMDSF (349 aa)) the chain is Cytoplasmic. The Protein kinase domain maps to 726–1013 (LNKASRIGEG…INSPVPHRIM (288 aa)). ATP is bound by residues 732–740 (IGEGVFGTV) and Lys-755. Phosphotyrosine occurs at positions 841 and 898.

This sequence belongs to the protein kinase superfamily. Ser/Thr protein kinase family.

It localises to the membrane. The chain is Probably inactive leucine-rich repeat receptor-like protein kinase At3g28040 from Arabidopsis thaliana (Mouse-ear cress).